A 268-amino-acid chain; its full sequence is Zinc import ATP-binding protein ZnuC (268 aa).

The region spanning 16 to 231 is the ABC transporter domain; sequence IQLKNINVVF…PTFMRLWGNQ (216 aa). 48 to 55 lines the ATP pocket; it reads GPNGGGKS.

This sequence belongs to the ABC transporter superfamily. Zinc importer (TC 3.A.1.15.5) family. As to quaternary structure, the complex is composed of two ATP-binding proteins (ZnuC), two transmembrane proteins (ZnuB) and a solute-binding protein (ZnuA).

The protein resides in the cell inner membrane. It carries out the reaction Zn(2+)(out) + ATP(in) + H2O(in) = Zn(2+)(in) + ADP(in) + phosphate(in) + H(+)(in). Part of the ABC transporter complex ZnuABC involved in zinc import. Responsible for energy coupling to the transport system. This chain is Zinc import ATP-binding protein ZnuC, found in Haemophilus influenzae (strain ATCC 51907 / DSM 11121 / KW20 / Rd).